Here is a 166-residue protein sequence, read N- to C-terminus: Small ribosomal subunit protein bS6 (166 aa).

Basic and acidic residues-rich tracts occupy residues 96–142 (HEEG…DRPP) and 149–166 (GGDR…GGAE). The segment at 96–166 (HEEGPSAMMQ…PREGFEGGAE (71 aa)) is disordered.

Belongs to the bacterial ribosomal protein bS6 family.

In terms of biological role, binds together with bS18 to 16S ribosomal RNA. This is Small ribosomal subunit protein bS6 from Mesorhizobium japonicum (strain LMG 29417 / CECT 9101 / MAFF 303099) (Mesorhizobium loti (strain MAFF 303099)).